Consider the following 154-residue polypeptide: Large-conductance mechanosensitive channel (154 aa).

The next 2 helical transmembrane spans lie at 12-32 and 71-91; these read GNIV…ALIT and IVLS…FLVV. The segment at 129 to 154 is disordered; sequence NGAPSGRHVDTADLTPTPNHEPRADT.

It belongs to the MscL family. As to quaternary structure, homopentamer.

Its subcellular location is the cell membrane. Its function is as follows. Channel that opens in response to stretch forces in the membrane lipid bilayer. May participate in the regulation of osmotic pressure changes within the cell. The polypeptide is Large-conductance mechanosensitive channel (Mycobacterium leprae (strain Br4923)).